We begin with the raw amino-acid sequence, 684 residues long: Probable potassium transport system protein Kup (684 aa).

The next 12 helical transmembrane spans lie at 19–39 (ALLV…LYVM), 61–81 (VSLI…LIAL), 104–124 (WLVL…MLTP), 151–171 (QVIW…RFGT), 177–197 (AFGP…FIAL), 223–243 (MGLF…ALYS), 255–275 (LSWP…AVWL), 303–323 (LGAI…LISG), 352–372 (LYIP…IGYF), 381–401 (AYGL…YQYL), 407–427 (PAVV…VFFI), and 433–453 (FLHG…VMYV).

It belongs to the HAK/KUP transporter (TC 2.A.72) family.

The protein localises to the cell membrane. It carries out the reaction K(+)(in) + H(+)(in) = K(+)(out) + H(+)(out). Its function is as follows. Transport of potassium into the cell. Likely operates as a K(+):H(+) symporter. This Lacticaseibacillus paracasei (strain ATCC 334 / BCRC 17002 / CCUG 31169 / CIP 107868 / KCTC 3260 / NRRL B-441) (Lactobacillus paracasei) protein is Probable potassium transport system protein Kup.